A 148-amino-acid polypeptide reads, in one-letter code: Isotocin-neurophysin IT 2 (148 aa).

A signal peptide spans Met-1–Ala-20. A disulfide bond links Cys-21 and Cys-26. Residue Gly-29 is modified to Glycine amide. 7 disulfide bridges follow: Cys-42–Cys-86, Cys-45–Cys-59, Cys-53–Cys-76, Cys-60–Cys-66, Cys-93–Cys-105, Cys-99–Cys-117, and Cys-106–Cys-111.

This sequence belongs to the vasopressin/oxytocin family.

Its function is as follows. Isotocin causes contraction of smooth muscles. In Catostomus commersonii (White sucker), this protein is Isotocin-neurophysin IT 2.